The following is a 284-amino-acid chain: Efem/EfeO family lipoprotein (284 aa).

A signal peptide spans 1-17 (MKKLTTLLLASTLLIAA). A lipid anchor (N-palmitoyl cysteine) is attached at Cys18. The S-diacylglycerol cysteine moiety is linked to residue Cys18.

Belongs to the EfeM/EfeO family.

The protein resides in the cell membrane. The sequence is that of Efem/EfeO family lipoprotein from Staphylococcus aureus (strain MSSA476).